A 393-amino-acid polypeptide reads, in one-letter code: S-adenosylmethionine synthase (393 aa).

His17 lines the ATP pocket. Asp19 lines the Mg(2+) pocket. Glu45 lines the K(+) pocket. Residues Glu58 and Gln106 each coordinate L-methionine. Residues 106–116 form a flexible loop region; the sequence is QSAHIAQGVDA. Residues 171 to 173, Asp246, 252 to 253, Ala269, and Lys273 contribute to the ATP site; these read DAK and RK. Asp246 is a binding site for L-methionine. Lys277 contacts L-methionine.

This sequence belongs to the AdoMet synthase family. Homotetramer; dimer of dimers. Mg(2+) serves as cofactor. K(+) is required as a cofactor.

The protein localises to the cytoplasm. It carries out the reaction L-methionine + ATP + H2O = S-adenosyl-L-methionine + phosphate + diphosphate. It functions in the pathway amino-acid biosynthesis; S-adenosyl-L-methionine biosynthesis; S-adenosyl-L-methionine from L-methionine: step 1/1. Its function is as follows. Catalyzes the formation of S-adenosylmethionine (AdoMet) from methionine and ATP. The overall synthetic reaction is composed of two sequential steps, AdoMet formation and the subsequent tripolyphosphate hydrolysis which occurs prior to release of AdoMet from the enzyme. The sequence is that of S-adenosylmethionine synthase from Roseobacter denitrificans (strain ATCC 33942 / OCh 114) (Erythrobacter sp. (strain OCh 114)).